Reading from the N-terminus, the 442-residue chain is PTS system oligo-beta-mannoside-specific EIIC component (442 aa).

Residues 5 to 411 (ISQFLVPIAG…LIVFVIWFPF (407 aa)) form the PTS EIIC type-3 domain. 11 consecutive transmembrane segments (helical) span residues 28–48 (AFMLAFPLTIFGSIFVVLTNL), 67–87 (FGIASTATMGIMSVFVVFGIG), 97–117 (EAVFGGAIALVSFLLLTPFII), 138–157 (GMFLGMITAFLSGEIYRRIV), 177–197 (FAALIPAFITLTVFLLINVMV), 205–225 (MHDVIYHAIQAPLVGLGSGII), 228–248 (LIAVFFIQILWFFGLHGQIII), 286–306 (TVGMGGTGMTLAIVFTILIFM), 329–349 (PIIFGLPIVMNPIIIVPWVLA), 365–385 (LVPPPTGVTVPWTVPLFINGI), and 391–411 (IMGGVMQLINLLIVFVIWFPF).

Its subcellular location is the cell membrane. Its function is as follows. The phosphoenolpyruvate-dependent sugar phosphotransferase system (sugar PTS), a major carbohydrate active transport system, catalyzes the phosphorylation of incoming sugar substrates concomitantly with their translocation across the cell membrane. The enzyme II GmuABC PTS system is involved in the transport of oligo-glucomannans such as cellobiose or mannobiose. This chain is PTS system oligo-beta-mannoside-specific EIIC component, found in Bacillus subtilis (strain 168).